Here is a 129-residue protein sequence, read N- to C-terminus: Small ribosomal subunit protein uS9 (129 aa).

The protein belongs to the universal ribosomal protein uS9 family.

The chain is Small ribosomal subunit protein uS9 from Helicobacter pylori (strain Shi470).